The chain runs to 295 residues: Bifunctional protein FolD (295 aa).

Residues 163–165 (GRS), Ser-188, and Ile-229 each bind NADP(+).

This sequence belongs to the tetrahydrofolate dehydrogenase/cyclohydrolase family. As to quaternary structure, homodimer.

It catalyses the reaction (6R)-5,10-methylene-5,6,7,8-tetrahydrofolate + NADP(+) = (6R)-5,10-methenyltetrahydrofolate + NADPH. It carries out the reaction (6R)-5,10-methenyltetrahydrofolate + H2O = (6R)-10-formyltetrahydrofolate + H(+). It functions in the pathway one-carbon metabolism; tetrahydrofolate interconversion. Its function is as follows. Catalyzes the oxidation of 5,10-methylenetetrahydrofolate to 5,10-methenyltetrahydrofolate and then the hydrolysis of 5,10-methenyltetrahydrofolate to 10-formyltetrahydrofolate. This Hyphomonas neptunium (strain ATCC 15444) protein is Bifunctional protein FolD.